Here is a 215-residue protein sequence, read N- to C-terminus: Cytochrome b6 (215 aa).

The chain crosses the membrane as a helical span at residues 32-52 (IFYCLGGITLTCFLVQVATGF). Position 35 (cysteine 35) interacts with heme c. Histidine 86 and histidine 100 together coordinate heme b. 3 helical membrane passes run 90 to 110 (ASMM…TGGF), 116 to 136 (LTWV…VTGY), and 186 to 206 (LHTF…FPMI). Heme b contacts are provided by histidine 187 and histidine 202.

The protein belongs to the cytochrome b family. PetB subfamily. As to quaternary structure, the 4 large subunits of the cytochrome b6-f complex are cytochrome b6, subunit IV (17 kDa polypeptide, PetD), cytochrome f and the Rieske protein, while the 4 small subunits are PetG, PetL, PetM and PetN. The complex functions as a dimer. The cofactor is heme b. Heme c serves as cofactor.

It is found in the plastid. The protein localises to the chloroplast thylakoid membrane. In terms of biological role, component of the cytochrome b6-f complex, which mediates electron transfer between photosystem II (PSII) and photosystem I (PSI), cyclic electron flow around PSI, and state transitions. In Lactuca sativa (Garden lettuce), this protein is Cytochrome b6.